The chain runs to 146 residues: Large ribosomal subunit protein uL14 (146 aa).

It belongs to the universal ribosomal protein uL14 family.

The sequence is that of Large ribosomal subunit protein uL14 (RPL23) from Encephalitozoon cuniculi (strain GB-M1) (Microsporidian parasite).